The chain runs to 165 residues: Crossover junction endodeoxyribonuclease RuvC (165 aa).

Catalysis depends on residues Asp-8, Glu-66, and Asp-138. Mg(2+) contacts are provided by Asp-8, Glu-66, and Asp-138.

The protein belongs to the RuvC family. Homodimer which binds Holliday junction (HJ) DNA. The HJ becomes 2-fold symmetrical on binding to RuvC with unstacked arms; it has a different conformation from HJ DNA in complex with RuvA. In the full resolvosome a probable DNA-RuvA(4)-RuvB(12)-RuvC(2) complex forms which resolves the HJ. Mg(2+) is required as a cofactor.

The protein localises to the cytoplasm. The catalysed reaction is Endonucleolytic cleavage at a junction such as a reciprocal single-stranded crossover between two homologous DNA duplexes (Holliday junction).. Functionally, the RuvA-RuvB-RuvC complex processes Holliday junction (HJ) DNA during genetic recombination and DNA repair. Endonuclease that resolves HJ intermediates. Cleaves cruciform DNA by making single-stranded nicks across the HJ at symmetrical positions within the homologous arms, yielding a 5'-phosphate and a 3'-hydroxyl group; requires a central core of homology in the junction. The consensus cleavage sequence is 5'-(A/T)TT(C/G)-3'. Cleavage occurs on the 3'-side of the TT dinucleotide at the point of strand exchange. HJ branch migration catalyzed by RuvA-RuvB allows RuvC to scan DNA until it finds its consensus sequence, where it cleaves and resolves the cruciform DNA. The chain is Crossover junction endodeoxyribonuclease RuvC from Methylococcus capsulatus (strain ATCC 33009 / NCIMB 11132 / Bath).